Consider the following 385-residue polypeptide: Acetylornithine aminotransferase (385 aa).

Pyridoxal 5'-phosphate is bound by residues 95–96 and Phe122; that span reads GA. Arg125 contacts N(2)-acetyl-L-ornithine. 208 to 211 lines the pyridoxal 5'-phosphate pocket; the sequence is DEIQ. Lys237 carries the post-translational modification N6-(pyridoxal phosphate)lysine. Thr265 lines the N(2)-acetyl-L-ornithine pocket. Thr266 provides a ligand contact to pyridoxal 5'-phosphate.

The protein belongs to the class-III pyridoxal-phosphate-dependent aminotransferase family. ArgD subfamily. As to quaternary structure, homodimer. Pyridoxal 5'-phosphate is required as a cofactor.

Its subcellular location is the cytoplasm. The catalysed reaction is N(2)-acetyl-L-ornithine + 2-oxoglutarate = N-acetyl-L-glutamate 5-semialdehyde + L-glutamate. It functions in the pathway amino-acid biosynthesis; L-arginine biosynthesis; N(2)-acetyl-L-ornithine from L-glutamate: step 4/4. The sequence is that of Acetylornithine aminotransferase from Bacillus subtilis (strain 168).